Here is a 65-residue protein sequence, read N- to C-terminus: Large ribosomal subunit protein bL35 (65 aa).

It belongs to the bacterial ribosomal protein bL35 family.

This Agathobacter rectalis (strain ATCC 33656 / DSM 3377 / JCM 17463 / KCTC 5835 / VPI 0990) (Eubacterium rectale) protein is Large ribosomal subunit protein bL35.